A 900-amino-acid polypeptide reads, in one-letter code: Translation initiation factor IF-2 (900 aa).

Disordered stretches follow at residues glycine 30–lysine 77 and asparagine 89–methionine 291. Low complexity predominate over residues asparagine 89–threonine 112. Over residues proline 113–proline 129 the composition is skewed to pro residues. The span at proline 175–alanine 187 shows a compositional bias: low complexity. Residues glycine 215–glycine 271 show a composition bias toward gly residues. Residues arginine 275 to lysine 284 are compositionally biased toward basic residues. Residues valine 396–leucine 567 form the tr-type G domain. Residues glycine 405 to threonine 412 are G1. Glycine 405–threonine 412 lines the GTP pocket. A G2 region spans residues glycine 430–histidine 434. The G3 stretch occupies residues aspartate 455–glycine 458. Residues aspartate 455 to histidine 459 and asparagine 509 to aspartate 512 each bind GTP. The G4 stretch occupies residues asparagine 509–aspartate 512. The tract at residues serine 545–lysine 547 is G5.

It belongs to the TRAFAC class translation factor GTPase superfamily. Classic translation factor GTPase family. IF-2 subfamily.

It is found in the cytoplasm. One of the essential components for the initiation of protein synthesis. Protects formylmethionyl-tRNA from spontaneous hydrolysis and promotes its binding to the 30S ribosomal subunits. Also involved in the hydrolysis of GTP during the formation of the 70S ribosomal complex. The sequence is that of Translation initiation factor IF-2 from Mycobacterium bovis (strain BCG / Pasteur 1173P2).